Reading from the N-terminus, the 155-residue chain is 6,7-dimethyl-8-ribityllumazine synthase (155 aa).

5-amino-6-(D-ribitylamino)uracil is bound by residues Phe23, 57-59 (AFE), and 81-83 (AVI). 86 to 87 (AT) contributes to the (2S)-2-hydroxy-3-oxobutyl phosphate binding site. The Proton donor role is filled by His89. Phe114 provides a ligand contact to 5-amino-6-(D-ribitylamino)uracil. A (2S)-2-hydroxy-3-oxobutyl phosphate-binding site is contributed by Arg128.

This sequence belongs to the DMRL synthase family.

The catalysed reaction is (2S)-2-hydroxy-3-oxobutyl phosphate + 5-amino-6-(D-ribitylamino)uracil = 6,7-dimethyl-8-(1-D-ribityl)lumazine + phosphate + 2 H2O + H(+). The protein operates within cofactor biosynthesis; riboflavin biosynthesis; riboflavin from 2-hydroxy-3-oxobutyl phosphate and 5-amino-6-(D-ribitylamino)uracil: step 1/2. Its function is as follows. Catalyzes the formation of 6,7-dimethyl-8-ribityllumazine by condensation of 5-amino-6-(D-ribitylamino)uracil with 3,4-dihydroxy-2-butanone 4-phosphate. This is the penultimate step in the biosynthesis of riboflavin. This is 6,7-dimethyl-8-ribityllumazine synthase from Geotalea uraniireducens (strain Rf4) (Geobacter uraniireducens).